We begin with the raw amino-acid sequence, 294 residues long: Homeobox protein HD1 (294 aa).

The ELK domain occupies 197 to 217; sequence ELKLELKQGFKSRIEDVREEI. Positions 218-281 form a DNA-binding region, homeobox; TALE-type; that stretch reads MRKRRAGKLP…NQRKRNWHNN (64 aa).

The protein belongs to the TALE/KNOX homeobox family. In roots, stems and cotyledons of one-week old seedlings. In mature plants, in young leaves from first level below flowers as well as in flower buds and open flowers.

It localises to the nucleus. Possible developmental regulator. This chain is Homeobox protein HD1 (HD1), found in Brassica napus (Rape).